The sequence spans 353 residues: Photosystem II D2 protein (353 aa).

T2 bears the N-acetylthreonine mark. T2 carries the phosphothreonine modification. A helical transmembrane segment spans residues 41-61 (CAYFAVGGWFTGTTFVTSWYT). H118 contacts chlorophyll a. Residues 125–141 (GFMLRQFELARSVQLRP) form a helical membrane-spanning segment. Residues Q130 and N143 each contribute to the pheophytin a site. Residues 153-166 (VFVSVFLIYPLGQS) traverse the membrane as a helical segment. Residue H198 coordinates chlorophyll a. Residues 208–228 (AALLCAIHGATVENTLFEDGD) form a helical membrane-spanning segment. H215 and F262 together coordinate a plastoquinone. A Fe cation-binding site is contributed by H215. Residue H269 coordinates Fe cation. A helical membrane pass occupies residues 279 to 295 (GLWMSALGVVGLALNLR).

Belongs to the reaction center PufL/M/PsbA/D family. As to quaternary structure, PSII is composed of 1 copy each of membrane proteins PsbA, PsbB, PsbC, PsbD, PsbE, PsbF, PsbH, PsbI, PsbJ, PsbK, PsbL, PsbM, PsbT, PsbX, PsbY, PsbZ, Psb30/Ycf12, at least 3 peripheral proteins of the oxygen-evolving complex and a large number of cofactors. It forms dimeric complexes. It depends on The D1/D2 heterodimer binds P680, chlorophylls that are the primary electron donor of PSII, and subsequent electron acceptors. It shares a non-heme iron and each subunit binds pheophytin, quinone, additional chlorophylls, carotenoids and lipids. There is also a Cl(-1) ion associated with D1 and D2, which is required for oxygen evolution. The PSII complex binds additional chlorophylls, carotenoids and specific lipids. as a cofactor.

Its subcellular location is the plastid. It localises to the chloroplast thylakoid membrane. It carries out the reaction 2 a plastoquinone + 4 hnu + 2 H2O = 2 a plastoquinol + O2. Photosystem II (PSII) is a light-driven water:plastoquinone oxidoreductase that uses light energy to abstract electrons from H(2)O, generating O(2) and a proton gradient subsequently used for ATP formation. It consists of a core antenna complex that captures photons, and an electron transfer chain that converts photonic excitation into a charge separation. The D1/D2 (PsbA/PsbD) reaction center heterodimer binds P680, the primary electron donor of PSII as well as several subsequent electron acceptors. D2 is needed for assembly of a stable PSII complex. In Solanum bulbocastanum (Wild potato), this protein is Photosystem II D2 protein.